The following is a 513-amino-acid chain: Putative ribose/galactose/methyl galactoside import ATP-binding protein 2 (513 aa).

ABC transporter domains follow at residues 24-260 (LSAE…VGRE) and 270-510 (VPIG…VMEL). Residue 56 to 63 (GENGAGKS) coordinates ATP.

Belongs to the ABC transporter superfamily. Carbohydrate importer 2 (CUT2) (TC 3.A.1.2) family.

Its subcellular location is the cell inner membrane. The enzyme catalyses D-ribose(out) + ATP + H2O = D-ribose(in) + ADP + phosphate + H(+). It carries out the reaction D-galactose(out) + ATP + H2O = D-galactose(in) + ADP + phosphate + H(+). Part of an ABC transporter complex involved in carbohydrate import. Could be involved in ribose, galactose and/or methyl galactoside import. Responsible for energy coupling to the transport system. The chain is Putative ribose/galactose/methyl galactoside import ATP-binding protein 2 from Rhizobium etli (strain ATCC 51251 / DSM 11541 / JCM 21823 / NBRC 15573 / CFN 42).